The sequence spans 475 residues: NADH-quinone oxidoreductase subunit N 1 (475 aa).

14 helical membrane-spanning segments follow: residues 8–28 (VMPL…EAAT), 36–56 (LFAI…PSEP), 67–87 (GGFF…ITLI), 100–120 (GEYY…SAAA), 122–142 (LTIL…LAGI), 157–177 (FLLG…IYGA), 199–219 (FLSG…AVPF), 244–264 (AAAL…LETF), 268–288 (PTAI…AALI), 295–315 (MFAY…ATGT), 322–342 (VLYY…IIIL), 366–386 (AFLM…GGFI), 403–423 (LAVA…RVVI), and 443–463 (ATIA…SLLI).

Belongs to the complex I subunit 2 family. As to quaternary structure, NDH-1 is composed of 14 different subunits. Subunits NuoA, H, J, K, L, M, N constitute the membrane sector of the complex.

It is found in the cell inner membrane. The catalysed reaction is a quinone + NADH + 5 H(+)(in) = a quinol + NAD(+) + 4 H(+)(out). Functionally, NDH-1 shuttles electrons from NADH, via FMN and iron-sulfur (Fe-S) centers, to quinones in the respiratory chain. The immediate electron acceptor for the enzyme in this species is believed to be a menaquinone. Couples the redox reaction to proton translocation (for every two electrons transferred, four hydrogen ions are translocated across the cytoplasmic membrane), and thus conserves the redox energy in a proton gradient. This Chloroherpeton thalassium (strain ATCC 35110 / GB-78) protein is NADH-quinone oxidoreductase subunit N 1.